The sequence spans 172 residues: Neuropeptide-like protein nlp-8 (172 aa).

A signal peptide spans 1-26 (MSQKLLPISPLQLLFLQCLLIGFTAA).

Post-translationally, may be processed by convertase egl-3.

It localises to the secreted. In terms of biological role, neuropeptide-like protein. Plays a role in behaviors associated with a sleep-like state induced by stress (SIS), acting in concert with the FARP (FMRFamide related) peptides, flp-13 and flp-24. The protein is Neuropeptide-like protein nlp-8 of Caenorhabditis elegans.